The chain runs to 610 residues: Elongation factor 4 (610 aa).

Residues 12–194 (EKIRNFSIIA…QIVEKVPAPQ (183 aa)) form the tr-type G domain. GTP-binding positions include 24-29 (DHGKST) and 141-144 (NKID).

The protein belongs to the TRAFAC class translation factor GTPase superfamily. Classic translation factor GTPase family. LepA subfamily.

It is found in the cell membrane. It catalyses the reaction GTP + H2O = GDP + phosphate + H(+). Its function is as follows. Required for accurate and efficient protein synthesis under certain stress conditions. May act as a fidelity factor of the translation reaction, by catalyzing a one-codon backward translocation of tRNAs on improperly translocated ribosomes. Back-translocation proceeds from a post-translocation (POST) complex to a pre-translocation (PRE) complex, thus giving elongation factor G a second chance to translocate the tRNAs correctly. Binds to ribosomes in a GTP-dependent manner. The sequence is that of Elongation factor 4 from Streptococcus thermophilus (strain CNRZ 1066).